Consider the following 350-residue polypeptide: Hydroxymethylglutaryl-CoA synthase (350 aa).

(3S)-3-hydroxy-3-methylglutaryl-CoA-binding residues include Asp-33 and Val-34. Glu-85 (proton donor/acceptor) is an active-site residue. Cys-117 and Thr-158 together coordinate (3S)-3-hydroxy-3-methylglutaryl-CoA. The active-site Acyl-thioester intermediate is Cys-117. A CoA-binding site is contributed by Arg-204. 2 residues coordinate (3S)-3-hydroxy-3-methylglutaryl-CoA: Thr-206 and His-239. His-239 serves as the catalytic Proton donor/acceptor. Lys-244 is a CoA binding site. Lys-248, Asn-271, and Ser-301 together coordinate (3S)-3-hydroxy-3-methylglutaryl-CoA.

This sequence belongs to the thiolase-like superfamily. Archaeal HMG-CoA synthase family. Interacts with acetoacetyl-CoA thiolase that catalyzes the precedent step in the pathway and with a DUF35 protein. The acetoacetyl-CoA thiolase/HMG-CoA synthase complex channels the intermediate via a fused CoA-binding site, which allows for efficient coupling of the endergonic thiolase reaction with the exergonic HMGCS reaction.

The enzyme catalyses acetoacetyl-CoA + acetyl-CoA + H2O = (3S)-3-hydroxy-3-methylglutaryl-CoA + CoA + H(+). It participates in metabolic intermediate biosynthesis; (R)-mevalonate biosynthesis; (R)-mevalonate from acetyl-CoA: step 2/3. Functionally, catalyzes the condensation of acetyl-CoA with acetoacetyl-CoA to form 3-hydroxy-3-methylglutaryl-CoA (HMG-CoA). Functions in the mevalonate (MVA) pathway leading to isopentenyl diphosphate (IPP), a key precursor for the biosynthesis of isoprenoid compounds that are building blocks of archaeal membrane lipids. This chain is Hydroxymethylglutaryl-CoA synthase, found in Methanopyrus kandleri (strain AV19 / DSM 6324 / JCM 9639 / NBRC 100938).